The sequence spans 260 residues: 3'-5' ssDNA/RNA exonuclease TatD (260 aa).

Residues E91, H127, and H152 each coordinate a divalent metal cation.

Belongs to the metallo-dependent hydrolases superfamily. TatD-type hydrolase family. TatD subfamily. In terms of assembly, monomer. Mg(2+) is required as a cofactor.

It is found in the cytoplasm. 3'-5' exonuclease that prefers single-stranded DNA and RNA. May play a role in the H(2)O(2)-induced DNA damage repair. The protein is 3'-5' ssDNA/RNA exonuclease TatD of Shigella flexneri serotype 5b (strain 8401).